The sequence spans 215 residues: Eukaryotic translation initiation factor 4E-1A (215 aa).

Residues 1-14 (MATAEPETSTNPSN) show a composition bias toward low complexity. Residues 1–23 (MATAEPETSTNPSNSEEKNEENE) form a disordered region. MRNA-binding positions include 54 to 55 (WQ), 100 to 101 (WE), 155 to 160 (RTKGDK), and 203 to 205 (TKS).

The protein belongs to the eukaryotic initiation factor 4E family. As to quaternary structure, interacts with eif4ebp3l. As to expression, expressed in all tissues examined, including gill, fin, heart, intestine, muscle, ovary and testis.

It localises to the cytoplasm. It is found in the nucleus. Its function is as follows. Recognizes and binds the 7-methylguanosine (m7G)-containing mRNA cap during an early step in the initiation of protein synthesis and facilitates ribosome binding by inducing the unwinding of the mRNAs secondary structures. Also promotes export of a subset of mRNAs from the nucleus to the cytoplasm. The protein is Eukaryotic translation initiation factor 4E-1A of Danio rerio (Zebrafish).